A 582-amino-acid polypeptide reads, in one-letter code: Solute carrier family 15 member 3 (582 aa).

Positions 1-20 (MSALRAEQQPSRSGERQPLV) are disordered. A run of 4 helical transmembrane segments spans residues 33–53 (TAAAAVLLVEMLERAAFFGVT), 77–97 (LLFLGASYLLAPVGGWLADVY), 102–122 (LAISLSLLLYLAATGLLLTTI), and 155–175 (PYCATTLYLVLLLLALAASSV). An N-linked (GlcNAc...) asparagine glycan is attached at Asn178. The chain crosses the membrane as a helical span at residues 201–221 (WFYWSINLGAILSLLVVAFIE). Residue Asn223 is glycosylated (N-linked (GlcNAc...) asparagine). 2 helical membrane-spanning segments follow: residues 232–252 (IIVGLVGLAFFIFLIATPVFI) and 312–332 (FQVLLKVLPVMVTLVPYWMVY). An N-linked (GlcNAc...) asparagine glycan is attached at Asn357. 2 consecutive transmembrane segments (helical) span residues 371–391 (IPEAWLLLANVAVILILVPVK) and 409–429 (LQKMALGMFFGFTSIIVAGVL). Asn440 is a glycosylation site (N-linked (GlcNAc...) asparagine). The next 3 membrane-spanning stretches (helical) occupy residues 466–485 (YLLIGISEIFASIPGLEFAY), 498–518 (GIFFCLSGVGSLLGSGLVALL), and 541–561 (LYFFLLAGIQAVTAVLFLWIA). Residue Asn575 is glycosylated (N-linked (GlcNAc...) asparagine).

It belongs to the major facilitator superfamily. Proton-dependent oligopeptide transporter (POT/PTR) (TC 2.A.17) family. In terms of tissue distribution, abundant expression in lung, spleen and thymus, and detected faintly in brain, liver, adrenal gland and heart at protein level.

The protein localises to the lysosome membrane. The protein resides in the endosome membrane. It carries out the reaction N-acetyl-D-muramoyl-L-alanyl-D-isoglutamine(out) + n H(+)(out) = N-acetyl-D-muramoyl-L-alanyl-D-isoglutamine(in) + n H(+)(in). The enzyme catalyses glycylglycylglycine(out) + n H(+)(out) = glycylglycylglycine(in) + n H(+)(in). The catalysed reaction is carnosine(out) + n H(+)(out) = carnosine(in) + n H(+)(in). It catalyses the reaction L-histidine(out) + n H(+)(out) = L-histidine(in) + n H(+)(in). Functionally, proton-coupled amino-acid transporter that transports free histidine and certain di- and tripeptides, and is involved in innate immune response. Also able to transport carnosine. Involved in the detection of microbial pathogens by toll-like receptors (TLRs) and NOD-like receptors (NLRs), probably by mediating transport of bacterial peptidoglycans across the endolysosomal membrane: catalyzes the transport of certain bacterial peptidoglycans, such as muramyl dipeptide (MDP), the NOD2 ligand. The polypeptide is Solute carrier family 15 member 3 (Slc15a3) (Rattus norvegicus (Rat)).